A 1109-amino-acid chain; its full sequence is Protein phosphatase 1 regulatory subunit 3A (1109 aa).

2 positions are modified to phosphoserine; by GSK3: Ser-40 and Ser-44. Residue Ser-48 is modified to Phosphoserine; by PKA and ISPK. A Phosphoserine modification is found at Ser-51. A Phosphothreonine modification is found at Thr-58. Residues 64 to 67 (RRVS) carry the PP1-binding motif motif. Position 67 is a phosphoserine; by PKA (Ser-67). Positions 124–232 (QLQVQKAMLE…NNNGTNYTLV (109 aa)) constitute a CBM21 domain. Residues 236–251 (KEPEPEPGKPLEEAPS) show a composition bias toward basic and acidic residues. Disordered regions lie at residues 236–278 (KEPE…NFEN), 340–424 (GKNT…SDGS), 436–455 (DDNA…CSFP), and 493–517 (YFKK…KEKR). 3 stretches are compositionally biased toward polar residues: residues 340–352 (GKNT…SNIP), 360–384 (KNQS…SAES), and 396–406 (YSSGNESSHQP). Ser-843 bears the Phosphoserine mark. Disordered stretches follow at residues 945 to 985 (SATE…RKEK) and 1011 to 1048 (SREN…ETQD). Polar residues predominate over residues 951–963 (YNCSPTRETQGQP). Basic and acidic residues-rich tracts occupy residues 966–985 (KPEE…RKEK) and 1011–1034 (SREN…KEFE). The span at 1035–1048 (SSASSSLPVQETQD) shows a compositional bias: polar residues. A helical membrane pass occupies residues 1066-1086 (FLLFLMFLVTVYHYDLMIGLA).

In terms of assembly, interacts with PPP1CC catalytic subunit of PP1, and associates with glycogen. Post-translationally, phosphorylation at Ser-48 by ISPK stimulates the dephosphorylation of glycogen synthase and phosphorylase kinase. As to expression, skeletal muscle, diaphragm and cardiac muscle.

It localises to the membrane. Functionally, seems to act as a glycogen-targeting subunit for PP1. PP1 is essential for cell division, and participates in the regulation of glycogen metabolism, muscle contractility and protein synthesis. Plays an important role in glycogen synthesis but is not essential for insulin activation of glycogen synthase. This Oryctolagus cuniculus (Rabbit) protein is Protein phosphatase 1 regulatory subunit 3A (PPP1R3A).